Consider the following 361-residue polypeptide: Versatile peroxidase VPL2 (361 aa).

The first 22 residues, 1–22 (MSFKTLSALALALGAAVQFASA), serve as a signal peptide directing secretion. The propeptide occupies 23–30 (AVPLVQKR). Cystine bridges form between cysteine 33–cysteine 45, cysteine 44–cysteine 308, cysteine 64–cysteine 144, and cysteine 272–cysteine 337. Mn(2+) is bound by residues glutamate 66 and glutamate 70. The Proton acceptor role is filled by histidine 77. The Ca(2+) site is built by aspartate 78, glycine 90, aspartate 92, and serine 94. An N-linked (GlcNAc...) asparagine glycan is attached at asparagine 126. The Tryptophan radical intermediate role is filled by tryptophan 194. A heme b-binding site is contributed by histidine 199. Serine 200 is a Ca(2+) binding site. A heme b-binding site is contributed by 203–207 (AADKV). Aspartate 205 serves as a coordination point for Mn(2+). Positions 217, 219, 222, and 224 each coordinate Ca(2+).

Belongs to the peroxidase family. Ligninase subfamily. It depends on heme b as a cofactor. Requires Ca(2+) as cofactor.

The protein resides in the secreted. It carries out the reaction 1-(4-hydroxy-3-methoxyphenyl)-2-(2-methoxyphenoxy)propane-1,3-diol + H2O2 = guaiacol + vanillin + glycolaldehyde + H2O. The catalysed reaction is 2 Mn(2+) + H2O2 + 2 H(+) = 2 Mn(3+) + 2 H2O. In terms of biological role, a versatile ligninolytic peroxidase that combines the substrate specificity characteristics of the two other ligninolytic peroxidases, manganese peroxidase and lignin peroxidase. The protein is Versatile peroxidase VPL2 (vpl2) of Pleurotus eryngii (Boletus of the steppes).